Here is a 533-residue protein sequence, read N- to C-terminus: WD repeat-containing protein JIP5 (533 aa).

WD repeat units follow at residues 26-67 (NYSD…EKQS), 84-130 (GKVS…GSCR), 176-215 (NSND…GSKL), 264-309 (NQDD…FMDQ), and 372-409 (GAAD…EIAL). 2 stretches are compositionally biased toward acidic residues: residues 408–428 (ALDE…EDDL) and 437–452 (ASDE…EDEK). Residues 408-533 (ALDESDDSDD…EHGIRRFDDL (126 aa)) are disordered. Composition is skewed to basic and acidic residues over residues 453 to 463 (EDKPVKIDHPL) and 521 to 533 (QKHE…FDDL).

This sequence belongs to the WD repeat WDR55 family.

It is found in the nucleus. Its subcellular location is the nucleolus. The sequence is that of WD repeat-containing protein JIP5 (JIP5) from Scheffersomyces stipitis (strain ATCC 58785 / CBS 6054 / NBRC 10063 / NRRL Y-11545) (Yeast).